The sequence spans 62 residues: Metallothionein-4 (62 aa).

Cys-6, Cys-8, Cys-14, Cys-16, Cys-20, Cys-22, Cys-25, Cys-27, Cys-30, Cys-34, Cys-35, Cys-37, Cys-38, Cys-42, Cys-45, Cys-49, Cys-51, Cys-58, Cys-60, and Cys-61 together coordinate a divalent metal cation.

This sequence belongs to the metallothionein superfamily. Type 1 family. In terms of tissue distribution, expressed exclusively in stratified squamous epithelia associated with oral epithelia, esophagus, upper stomach, tail, footpads and neonatal skin.

In terms of biological role, seems to bind zinc and copper. Could play a special role in regulating zinc metabolism during the differentiation of stratified epithelia. The protein is Metallothionein-4 (Mt4) of Mus musculus (Mouse).